A 249-amino-acid chain; its full sequence is 5'-nucleotidase SurE (249 aa).

D8, D9, S39, and N96 together coordinate a divalent metal cation.

This sequence belongs to the SurE nucleotidase family. Requires a divalent metal cation as cofactor.

The protein resides in the cytoplasm. It carries out the reaction a ribonucleoside 5'-phosphate + H2O = a ribonucleoside + phosphate. Nucleotidase that shows phosphatase activity on nucleoside 5'-monophosphates. The protein is 5'-nucleotidase SurE of Clostridium tetani (strain Massachusetts / E88).